The chain runs to 151 residues: uncharacterized protein (151 aa).

A signal peptide spans 1-32 (MEEAEKAKRRSIELLNETRNCAYSSFVALAEA). A helical membrane pass occupies residues 45-67 (AIGFAGGISGSGHICGALWGSIA).

Its subcellular location is the membrane. This is an uncharacterized protein from Archaeoglobus fulgidus (strain ATCC 49558 / DSM 4304 / JCM 9628 / NBRC 100126 / VC-16).